The following is a 990-amino-acid chain: FTIFLGVALLQGVLTLSPIPVPEEEWAEFSRMLRDPSYRLPTTTRPRHYAVTLTPYFDVVPAGVSGLTTFSFDGEVTIYISPTQANVNEIVLHCNDLTIQSLRVTYVSGNSEVDITATGQTFTCEMPYSFLRIRTSTPLVMNQEYIIRSTFRGNLQTNMRGFYRSWYVDRTGKRWMATTQFQPGHARQAFPCYDEPGFKATFDITMNREADFSPTISNMPIRATTTLTNGRISETFFTTPLTSTYLLAFIVSHYQVISNNNNAARPFRIYARNNVGSQGDWSLEMGEKLLLAMENYTAIPYYTMAQNLDMKQAAIPDFSAGAMENWGLLTYREALILYDPLNSNHHYRQRVANIVSHEIAHMWFGNLVTCAWWDNLWLNEGFARFSQYYLTATVDPELGYEIRFIPEQLQVAMFSDSVDSAHALTDTSVNDPVAVSAHFSTITYARGAAILRMTQHLLSYDTFVKGLRQYLRARQFDVAEPYHLFSALDAAAAEDNALAAYRGITIDAYFRTWSEKAGHPLLSVTVDHESGRMTLVQARWERNTGVSRFPGLWHIPITWTRAGAPDFENLKPSQVMTGQSLVIDRGTRGQEWVIFNKQVSGFYRVNYDNTTWGLITRALRSANRTVIHELSRSQIVDDVFQLARSGVMSYQRALNILSYLRFEDAYAPWLSAISGFNWVIRRFAHDAANLQTLQNQIIGLSEAVVARLGFTEVSGGTYMTDLQRLHVMQFLCNVGHQQCIDAGRQNFLNWRNGSFIPANMRPWVYCTGLRYGSAEDFNYFWNRYIVEDLSNEKVVMLEAAGCTRDQASLEKFLNAIVSGNDDVRPQDHSSALSSAITSNDVNTMRAFDWLTKNVDQITRTLGSITSPLNTITSRLLTEAQMTQVQTWLDANRNTIGAAYNTGVNGIATSRANLQWSANRMSEFLRFFETGFVDDVPSEATTVAPPAETTVTPSTFPPTVAPATTPAPGSGNIAALSVVSLLVTLAINMVA.

An N-terminal signal peptide occupies residues 1–15 (FTIFLGVALLQGVLT). Residues 16-35 (LSPIPVPEEEWAEFSRMLRD) constitute a propeptide, activation peptide. N295 carries N-linked (GlcNAc...) asparagine glycosylation. A substrate-binding site is contributed by 321 to 325 (GAMEN). H357 is a Zn(2+) binding site. E358 (proton acceptor) is an active-site residue. Residues H361 and E380 each coordinate Zn(2+). N-linked (GlcNAc...) asparagine glycans are attached at residues N609, N623, and N752. A lipid anchor (GPI-anchor amidated glycine) is attached at G968. Positions 969–990 (SGNIAALSVVSLLVTLAINMVA) are cleaved as a propeptide — removed in mature form.

It belongs to the peptidase M1 family. Zn(2+) is required as a cofactor. As to expression, midgut brush-border membrane.

The protein resides in the cell membrane. In terms of biological role, binds to the B.thuringiensis toxin, CryIA(C). This chain is Membrane alanyl aminopeptidase, found in Manduca sexta (Tobacco hawkmoth).